A 97-amino-acid polypeptide reads, in one-letter code: ORF9b protein (97 aa).

The region spanning 8 to 97 (MHPALRLVDP…PDEFVVVTVK (90 aa)) is the 9b domain. The short motif at 45–53 (ILRLGSPLS) is the Nuclear export signal element.

The protein belongs to the coronavirus group 2 protein 9b family. Homodimer. Interacts with host TOMM70; the interaction occurs only with monomer.

It localises to the host cytoplasm. Its subcellular location is the host mitochondrion. In terms of biological role, plays a role in inhibiting the host innate immune response by targeting the mitochondrial-associated innate immune response. Acts by binding to host TOMM70, inhibiting its binding to HSP90AB1 thereby disrupting the interferon activation pathway. The protein is ORF9b protein of Homo sapiens (Human).